The chain runs to 579 residues: Isocitrate dehydrogenase kinase/phosphatase (579 aa).

ATP is bound by residues 324–330 (ADGTPGM) and Lys-345. Asp-380 is a catalytic residue.

This sequence belongs to the AceK family.

The protein localises to the cytoplasm. The enzyme catalyses L-seryl-[isocitrate dehydrogenase] + ATP = O-phospho-L-seryl-[isocitrate dehydrogenase] + ADP + H(+). Its function is as follows. Bifunctional enzyme which can phosphorylate or dephosphorylate isocitrate dehydrogenase (IDH) on a specific serine residue. This is a regulatory mechanism which enables bacteria to bypass the Krebs cycle via the glyoxylate shunt in response to the source of carbon. When bacteria are grown on glucose, IDH is fully active and unphosphorylated, but when grown on acetate or ethanol, the activity of IDH declines drastically concomitant with its phosphorylation. This Xanthomonas euvesicatoria pv. vesicatoria (strain 85-10) (Xanthomonas campestris pv. vesicatoria) protein is Isocitrate dehydrogenase kinase/phosphatase.